The chain runs to 238 residues: ATP-dependent dethiobiotin synthetase BioD (238 aa).

ATP is bound at residue 12–17 (GVGKTV). Threonine 16 is a binding site for Mg(2+). Lysine 37 is an active-site residue. Threonine 41 is a binding site for substrate. ATP-binding positions include aspartate 50, 109–112 (EGAG), 170–171 (GS), and 200–202 (PAG). Residues aspartate 50 and glutamate 109 each contribute to the Mg(2+) site.

This sequence belongs to the dethiobiotin synthetase family. As to quaternary structure, homodimer. The cofactor is Mg(2+).

The protein localises to the cytoplasm. It carries out the reaction (7R,8S)-7,8-diammoniononanoate + CO2 + ATP = (4R,5S)-dethiobiotin + ADP + phosphate + 3 H(+). It participates in cofactor biosynthesis; biotin biosynthesis; biotin from 7,8-diaminononanoate: step 1/2. In terms of biological role, catalyzes a mechanistically unusual reaction, the ATP-dependent insertion of CO2 between the N7 and N8 nitrogen atoms of 7,8-diaminopelargonic acid (DAPA, also called 7,8-diammoniononanoate) to form a ureido ring. This chain is ATP-dependent dethiobiotin synthetase BioD, found in Frankia casuarinae (strain DSM 45818 / CECT 9043 / HFP020203 / CcI3).